Consider the following 55-residue polypeptide: MSTTAKIDFETGLFDEGQYEEAPDLPAIQPKRRTSRAPFIVAGGLLLGVVSENGN.

This is an uncharacterized protein from Acidithiobacillus ferrooxidans (Thiobacillus ferrooxidans).